Reading from the N-terminus, the 370-residue chain is DNA replication and repair protein RecF (370 aa).

30-37 (GQNGMGKT) lines the ATP pocket.

It belongs to the RecF family.

It localises to the cytoplasm. Its function is as follows. The RecF protein is involved in DNA metabolism; it is required for DNA replication and normal SOS inducibility. RecF binds preferentially to single-stranded, linear DNA. It also seems to bind ATP. This chain is DNA replication and repair protein RecF, found in Bacteroides fragilis (strain YCH46).